The sequence spans 285 residues: Acetylglutamate kinase (285 aa).

Substrate contacts are provided by residues 63–64 (GG), Arg-85, and Asn-178.

Belongs to the acetylglutamate kinase family. ArgB subfamily.

It localises to the cytoplasm. The catalysed reaction is N-acetyl-L-glutamate + ATP = N-acetyl-L-glutamyl 5-phosphate + ADP. Its pathway is amino-acid biosynthesis; L-arginine biosynthesis; N(2)-acetyl-L-ornithine from L-glutamate: step 2/4. Catalyzes the ATP-dependent phosphorylation of N-acetyl-L-glutamate. The polypeptide is Acetylglutamate kinase (Synechococcus sp. (strain CC9311)).